Here is a 151-residue protein sequence, read N- to C-terminus: Small ribosomal subunit protein uS19 (151 aa).

Belongs to the universal ribosomal protein uS19 family.

The sequence is that of Small ribosomal subunit protein uS19 (RPS15) from Picea mariana (Black spruce).